Consider the following 378-residue polypeptide: REST corepressor 3 (378 aa).

The ELM2 domain maps to 1–83 (MRVGAEYQAR…KSLADLPNFT (83 aa)). Residues 84–135 (PFPDEWTVEDKVLFEQAFSFHGKSFHRIQQMLPDKTIASLVKYYYSWKKTRS) enclose the SANT domain. Positions 147 to 219 (LANRNNQGDS…SQRSKCRPPK (73 aa)) are disordered. Basic and acidic residues predominate over residues 162 to 184 (EPHPMDGNDSDYDPKKEAKKEGN). Residues 205–217 (QHRHHSQRSKCRP) are compositionally biased toward basic residues. The stretch at 238-273 (ANTILRRLDMELISLKRQVQNAKQVNSALKQKMEGG) forms a coiled coil. The segment at 337–356 (TASSTSCCSCSPPSASAAPT) is disordered.

Belongs to the CoREST family.

It localises to the nucleus. May act as a component of a corepressor complex that represses transcription. The protein is REST corepressor 3 (RCOR3) of Gallus gallus (Chicken).